The primary structure comprises 246 residues: 3-deoxy-manno-octulosonate cytidylyltransferase (246 aa).

Belongs to the KdsB family.

The protein resides in the cytoplasm. The enzyme catalyses 3-deoxy-alpha-D-manno-oct-2-ulosonate + CTP = CMP-3-deoxy-beta-D-manno-octulosonate + diphosphate. Its pathway is nucleotide-sugar biosynthesis; CMP-3-deoxy-D-manno-octulosonate biosynthesis; CMP-3-deoxy-D-manno-octulosonate from 3-deoxy-D-manno-octulosonate and CTP: step 1/1. It functions in the pathway bacterial outer membrane biogenesis; lipopolysaccharide biosynthesis. Activates KDO (a required 8-carbon sugar) for incorporation into bacterial lipopolysaccharide in Gram-negative bacteria. This chain is 3-deoxy-manno-octulosonate cytidylyltransferase, found in Rickettsia peacockii (strain Rustic).